The chain runs to 674 residues: Pre-mRNA-splicing factor cwf4 (674 aa).

16 HAT repeats span residues 50 to 82 (EFQG…WELD), 84 to 116 (KEFA…CEMK), 118 to 150 (RNIN…MEEM), 152 to 183 (GNIT…MERR), 185 to 216 (HENE…FEEE), 218 to 253 (GNAA…FEIR), 255 to 289 (KEYE…FEKQ), 299 to 331 (TVLD…LEES), 333 to 367 (GDIN…IWLN), 377 to 413 (KDVD…FELR), 415 to 446 (RKID…FEDA), 448 to 480 (KQFD…LETK), 482 to 516 (GDSD…FEFE), 518 to 549 (MEYG…FEIA), 567 to 608 (TAVV…MHGT), and 610 to 643 (DTRK…YLFP).

Belongs to the crooked-neck family. Belongs to the 40S cdc5-associated complex (or cwf complex), a spliceosome sub-complex reminiscent of a late-stage spliceosome composed of the U2, U5 and U6 snRNAs and at least brr2, cdc5, cwf2/prp3, cwf3/syf1, cwf4/syf3, cwf5/ecm2, spp42/cwf6, cwf7/spf27, cwf8, cwf9, cwf10, cwf11, cwf12, prp45/cwf13, cwf14, cwf15, cwf16, cwf17, cwf18, cwf19, cwf20, cwf21, cwf22, cwf23, cwf24, cwf25, cwf26, cyp7/cwf27, cwf28, cwf29/ist3, lea1, msl1, prp5/cwf1, prp10, prp12/sap130, prp17, prp22, sap61, sap62, sap114, sap145, slu7, smb1, smd1, smd3, smf1, smg1 and syf2.

It localises to the nucleus. Its function is as follows. Involved in pre-mRNA splicing and cell cycle progression. Required for the spliceosome assembly and initiation of the DNA replication. The protein is Pre-mRNA-splicing factor cwf4 (cwf4) of Schizosaccharomyces pombe (strain 972 / ATCC 24843) (Fission yeast).